Reading from the N-terminus, the 396-residue chain is Elongation factor Tu (396 aa).

Positions 10–206 (KPHVNVGTIG…ALDTYIPTPE (197 aa)) constitute a tr-type G domain. A G1 region spans residues 19-26 (GHVDHGKT). 19 to 26 (GHVDHGKT) provides a ligand contact to GTP. T26 contributes to the Mg(2+) binding site. A G2 region spans residues 60-64 (GITIN). Residues 81–84 (DCPG) are G3. Residues 81–85 (DCPGH) and 136–139 (NKCD) each bind GTP. Residues 136 to 139 (NKCD) are G4. The interval 174 to 176 (SAK) is G5.

Belongs to the TRAFAC class translation factor GTPase superfamily. Classic translation factor GTPase family. EF-Tu/EF-1A subfamily. As to quaternary structure, monomer.

Its subcellular location is the cytoplasm. It catalyses the reaction GTP + H2O = GDP + phosphate + H(+). Functionally, GTP hydrolase that promotes the GTP-dependent binding of aminoacyl-tRNA to the A-site of ribosomes during protein biosynthesis. The protein is Elongation factor Tu of Paraburkholderia xenovorans (strain LB400).